A 446-amino-acid chain; its full sequence is Exodeoxyribonuclease 7 large subunit (446 aa).

Belongs to the XseA family. Heterooligomer composed of large and small subunits.

The protein resides in the cytoplasm. The catalysed reaction is Exonucleolytic cleavage in either 5'- to 3'- or 3'- to 5'-direction to yield nucleoside 5'-phosphates.. In terms of biological role, bidirectionally degrades single-stranded DNA into large acid-insoluble oligonucleotides, which are then degraded further into small acid-soluble oligonucleotides. This is Exodeoxyribonuclease 7 large subunit from Streptococcus pneumoniae (strain ATCC BAA-255 / R6).